The chain runs to 1400 residues: DNA-directed RNA polymerase subunit beta (1400 aa).

The protein belongs to the RNA polymerase beta chain family. In terms of assembly, the RNAP catalytic core consists of 2 alpha, 1 beta, 1 beta' and 1 omega subunit. When a sigma factor is associated with the core the holoenzyme is formed, which can initiate transcription.

The enzyme catalyses RNA(n) + a ribonucleoside 5'-triphosphate = RNA(n+1) + diphosphate. Functionally, DNA-dependent RNA polymerase catalyzes the transcription of DNA into RNA using the four ribonucleoside triphosphates as substrates. The chain is DNA-directed RNA polymerase subunit beta from Acidiphilium cryptum (strain JF-5).